The sequence spans 143 residues: Putative pre-16S rRNA nuclease (143 aa).

The protein belongs to the YqgF nuclease family.

Its subcellular location is the cytoplasm. Functionally, could be a nuclease involved in processing of the 5'-end of pre-16S rRNA. This is Putative pre-16S rRNA nuclease (ybeB) from Lactococcus lactis subsp. lactis (strain IL1403) (Streptococcus lactis).